Reading from the N-terminus, the 420-residue chain is S-adenosylmethionine synthase (420 aa).

Residue His16 participates in ATP binding. Position 18 (Asp18) interacts with Mg(2+). Position 44 (Glu44) interacts with K(+). L-methionine contacts are provided by Glu57 and Gln100. The tract at residues 100–110 is flexible loop; it reads QSADIAQGVDK. Residues 175–177, 251–252, Asp260, 266–267, Ala283, and Lys287 contribute to the ATP site; these read DGK, KF, and RK. Asp260 is an L-methionine binding site. Lys291 is an L-methionine binding site.

Belongs to the AdoMet synthase family. As to quaternary structure, homotetramer; dimer of dimers. Mg(2+) serves as cofactor. Requires K(+) as cofactor.

Its subcellular location is the cytoplasm. The enzyme catalyses L-methionine + ATP + H2O = S-adenosyl-L-methionine + phosphate + diphosphate. It participates in amino-acid biosynthesis; S-adenosyl-L-methionine biosynthesis; S-adenosyl-L-methionine from L-methionine: step 1/1. Functionally, catalyzes the formation of S-adenosylmethionine (AdoMet) from methionine and ATP. The overall synthetic reaction is composed of two sequential steps, AdoMet formation and the subsequent tripolyphosphate hydrolysis which occurs prior to release of AdoMet from the enzyme. The chain is S-adenosylmethionine synthase from Trichodesmium erythraeum (strain IMS101).